The primary structure comprises 362 residues: Patr class I histocompatibility antigen, A-5 alpha chain (362 aa).

A signal peptide spans 1 to 24 (MQVTAPRTVLLLLSAALALTETWA). The segment at 25 to 114 (GSHSMKYFYT…LRGYYNQSEA (90 aa)) is alpha-1. The Extracellular portion of the chain corresponds to 25–308 (GSHSMKYFYT…EPSSQSTIPI (284 aa)). Asparagine 110 carries N-linked (GlcNAc...) asparagine glycosylation. The interval 115–206 (GSHIIQRMYG…ENGKETLQRA (92 aa)) is alpha-2. Cystine bridges form between cysteine 125-cysteine 188 and cysteine 227-cysteine 283. The interval 207-298 (DPPKTHVTHH…GLPKPLTLRW (92 aa)) is alpha-3. An Ig-like C1-type domain is found at 209–295 (PKTHVTHHPI…QHEGLPKPLT (87 aa)). A connecting peptide region spans residues 299-308 (EPSSQSTIPI). The helical transmembrane segment at 309-332 (VGIVAGLAVLAVVVIGAVVAAVMC) threads the bilayer. Topologically, residues 333–362 (RRKSSGGKGGSYSQAASSDSAQGSDVSLTA) are cytoplasmic. The interval 336-362 (SSGGKGGSYSQAASSDSAQGSDVSLTA) is disordered. Serine 343 carries the post-translational modification Phosphoserine. Low complexity predominate over residues 343–362 (SYSQAASSDSAQGSDVSLTA). Tyrosine 344 bears the Phosphotyrosine mark. A phosphoserine mark is found at serine 345, serine 349, serine 350, serine 352, serine 356, and serine 359.

It belongs to the MHC class I family. In terms of assembly, heterodimer of an alpha chain and a beta chain (beta-2-microglobulin).

It is found in the membrane. Involved in the presentation of foreign antigens to the immune system. This Pan troglodytes (Chimpanzee) protein is Patr class I histocompatibility antigen, A-5 alpha chain.